The primary structure comprises 365 residues: Chorismate synthase (365 aa).

R48 lines the NADP(+) pocket. FMN is bound by residues 125 to 127 (RSS), 238 to 239 (NA), G278, 293 to 297 (KPTSS), and R319.

The protein belongs to the chorismate synthase family. As to quaternary structure, homotetramer. FMNH2 is required as a cofactor.

The enzyme catalyses 5-O-(1-carboxyvinyl)-3-phosphoshikimate = chorismate + phosphate. Its pathway is metabolic intermediate biosynthesis; chorismate biosynthesis; chorismate from D-erythrose 4-phosphate and phosphoenolpyruvate: step 7/7. Functionally, catalyzes the anti-1,4-elimination of the C-3 phosphate and the C-6 proR hydrogen from 5-enolpyruvylshikimate-3-phosphate (EPSP) to yield chorismate, which is the branch point compound that serves as the starting substrate for the three terminal pathways of aromatic amino acid biosynthesis. This reaction introduces a second double bond into the aromatic ring system. This chain is Chorismate synthase, found in Marinomonas sp. (strain MWYL1).